We begin with the raw amino-acid sequence, 496 residues long: Hemophilin secretion modulator (496 aa).

Positions 1 to 19 (MKRTLLCCLTLLSCPFLYA) are cleaved as a signal peptide. Transmembrane regions (beta stranded) follow at residues 198 to 208 (WQGSVSAGYTY), 253 to 263 (DYEASLIKRYA), 268 to 277 (HGVALRALAF), 291 to 301 (TININAGYSYF), 305 to 315 (NQIGVSPLFEH), 327 to 337 (WGARAEWMHFI), 341 to 351 (KAFKLEAESKD), 365 to 374 (SSAFATFWKI), 380 to 389 (TFFGGLDVLD), 403 to 413 (QGVRLGLSKSW), 418 to 427 (NTTLLSSYRW), 446 to 455 (QNHTFVVQMP), 462 to 472 (MTPNLTYRYNH), and 486 to 495 (HNISFKLEHR).

This sequence belongs to the Slam family.

The protein localises to the cell outer membrane. Functionally, part of a high affinity heme acquisition system. Mediates the secretion of the hemophilin HphA across the outer membrane into the extracellular environment. Plays a supporting role for full virulence. This is Hemophilin secretion modulator from Acinetobacter baumannii.